Consider the following 42-residue polypeptide: Photosystem II reaction center protein J (42 aa).

A helical transmembrane segment spans residues 10-30 (IPLWFIGVIAGIAALSIVGLF).

This sequence belongs to the PsbJ family. PSII is composed of 1 copy each of membrane proteins PsbA, PsbB, PsbC, PsbD, PsbE, PsbF, PsbH, PsbI, PsbJ, PsbK, PsbL, PsbM, PsbT, PsbX, PsbY, PsbZ, Psb30/Ycf12, at least 3 peripheral proteins of the oxygen-evolving complex and a large number of cofactors. It forms dimeric complexes.

The protein resides in the plastid. The protein localises to the chloroplast thylakoid membrane. Functionally, one of the components of the core complex of photosystem II (PSII). PSII is a light-driven water:plastoquinone oxidoreductase that uses light energy to abstract electrons from H(2)O, generating O(2) and a proton gradient subsequently used for ATP formation. It consists of a core antenna complex that captures photons, and an electron transfer chain that converts photonic excitation into a charge separation. In Zygnema circumcarinatum (Green alga), this protein is Photosystem II reaction center protein J.